Consider the following 350-residue polypeptide: Hydroxymethylglutaryl-CoA synthase (350 aa).

Glu-83 functions as the Proton donor/acceptor in the catalytic mechanism. The Acyl-thioester intermediate role is filled by Cys-115. (3S)-3-hydroxy-3-methylglutaryl-CoA contacts are provided by Cys-115 and Thr-156. Arg-204 is a binding site for CoA. (3S)-3-hydroxy-3-methylglutaryl-CoA-binding residues include Thr-206 and His-239. The Proton donor/acceptor role is filled by His-239. Lys-244 lines the CoA pocket. Positions 271 and 301 each coordinate (3S)-3-hydroxy-3-methylglutaryl-CoA.

Belongs to the thiolase-like superfamily. Archaeal HMG-CoA synthase family. As to quaternary structure, interacts with acetoacetyl-CoA thiolase that catalyzes the precedent step in the pathway and with a DUF35 protein. The acetoacetyl-CoA thiolase/HMG-CoA synthase complex channels the intermediate via a fused CoA-binding site, which allows for efficient coupling of the endergonic thiolase reaction with the exergonic HMGCS reaction.

It carries out the reaction acetoacetyl-CoA + acetyl-CoA + H2O = (3S)-3-hydroxy-3-methylglutaryl-CoA + CoA + H(+). It participates in metabolic intermediate biosynthesis; (R)-mevalonate biosynthesis; (R)-mevalonate from acetyl-CoA: step 2/3. Its function is as follows. Catalyzes the condensation of acetyl-CoA with acetoacetyl-CoA to form 3-hydroxy-3-methylglutaryl-CoA (HMG-CoA). Functions in the mevalonate (MVA) pathway leading to isopentenyl diphosphate (IPP), a key precursor for the biosynthesis of isoprenoid compounds that are building blocks of archaeal membrane lipids. This chain is Hydroxymethylglutaryl-CoA synthase, found in Thermococcus sibiricus (strain DSM 12597 / MM 739).